The sequence spans 675 residues: Mitochondrial distribution and morphology protein 12 (675 aa).

Residues 1–675 (MSIDLNWDTV…VYPSFWTFLV (675 aa)) form the SMP-LTD domain. Disordered stretches follow at residues 66–186 (LPDF…GTNH), 241–270 (GPSW…GAGG), 307–327 (GTGK…PLGT), 365–390 (TGPR…VAPA), and 444–517 (PKQG…RFRE). A compositionally biased stretch (acidic residues) spans 78-101 (SSEESDSEEEVAYENEGEYLDDPV). A compositionally biased stretch (low complexity) spans 123 to 137 (NSSTGSRNGSGPNSG). Positions 261-270 (GGAGGGGAGG) are enriched in gly residues. Low complexity predominate over residues 317-327 (PLTGTSTPLGT). 2 stretches are compositionally biased toward polar residues: residues 373–382 (PSSQSLNSVG) and 454–469 (VSTL…NNRA). The segment covering 497–510 (EPEEDEEEEEEGEE) has biased composition (acidic residues).

Belongs to the MDM12 family. In terms of assembly, component of the ER-mitochondria encounter structure (ERMES) or MDM complex, composed of mmm-1, mdm10, mdm12 and mdm34. A mmm-1 homodimer associates with one molecule of mdm12 on each side in a pairwise head-to-tail manner, and the SMP-LTD domains of mmm-1 and mdm12 generate a continuous hydrophobic tunnel for phospholipid trafficking.

Its subcellular location is the mitochondrion outer membrane. It is found in the endoplasmic reticulum membrane. Its function is as follows. Component of the ERMES/MDM complex, which serves as a molecular tether to connect the endoplasmic reticulum (ER) and mitochondria. Components of this complex are involved in the control of mitochondrial shape and protein biogenesis, and function in nonvesicular lipid trafficking between the ER and mitochondria. Mdm12 is required for the interaction of the ER-resident membrane protein MMM1 and the outer mitochondrial membrane-resident beta-barrel protein mdm10. The mdm12-mmm-1 subcomplex functions in the major beta-barrel assembly pathway that is responsible for biogenesis of all mitochondrial outer membrane beta-barrel proteins, and acts in a late step after the SAM complex. The mdm10-mdm12-mmm-1 subcomplex further acts in the TOM40-specific pathway after the action of the mdm12-mmm1 complex. Essential for establishing and maintaining the structure of mitochondria and maintenance of mtDNA nucleoids. The chain is Mitochondrial distribution and morphology protein 12 from Neurospora crassa (strain ATCC 24698 / 74-OR23-1A / CBS 708.71 / DSM 1257 / FGSC 987).